Consider the following 325-residue polypeptide: D site-binding protein (325 aa).

Disordered stretches follow at residues 1-99, 127-200, and 229-255; these read MARP…APGL, GLPP…DTVE, and RFSE…EQKD. Gly residues predominate over residues 17–28; sequence GPAGTPPGGGAL. 2 stretches are compositionally biased toward low complexity: residues 29-38 and 57-80; these read LGLRSLLQGT and ALPA…PAGA. Serine 86 is modified (phosphoserine). A compositionally biased stretch (pro residues) spans 129 to 153; it reads PPSPPPPGGPSPEPSPARTPAPSPG. The segment covering 157-167 has biased composition (low complexity); sequence CGSASPRSSPG. The bZIP domain occupies 255–318; sequence DEKYWSRRYK…SHYRAVLSRY (64 aa). A basic motif region spans residues 257 to 279; sequence KYWSRRYKNNEAAKRSRDARRLK. The segment at 283–297 is leucine-zipper; sequence ISVRAAFLEKENALL.

This sequence belongs to the bZIP family. PAR subfamily. As to quaternary structure, binds DNA as a homodimer or a heterodimer. Can form a heterodimer with TEF. In terms of tissue distribution, ubiquitously expressed. Expressed in the suprachiasmatic nuclei (SCN) and in most peripheral tissues, with a strong circadian rhythmicity.

It localises to the nucleus. Its function is as follows. This transcriptional activator recognizes and binds to the sequence 5'-RTTAYGTAAY-3' found in the promoter of genes such as albumin, CYP2A4 and CYP2A5. It is not essential for circadian rhythm generation, but modulates important clock output genes. May be a direct target for regulation by the circadian pacemaker component clock. May affect circadian period and sleep regulation. The chain is D site-binding protein (DBP) from Homo sapiens (Human).